The following is a 529-amino-acid chain: VIN3-like protein 3 (529 aa).

The short motif at 97–104 (PKRQKRDL) is the Nuclear localization signal element. The PHD-type zinc-finger motif lies at 137–207 (RCSCCICFKY…CFNCVSCGKT (71 aa)). A Nuclear localization signal motif is present at residues 214-221 (LKKQLIIA). Residues 312–411 (GSMKIRIESV…FIVSTKTLQD (100 aa)) enclose the Fibronectin type-III domain. Residues 421–529 (MSNCNNANKM…AGVSLILLQD (109 aa)) are VIN3-Interacting Domain (VID).

As to quaternary structure, interacts with VIN3.

Its subcellular location is the nucleus. Involved in both the vernalization and photoperiod pathways by regulating gene expression. The polypeptide is VIN3-like protein 3 (VIL3) (Arabidopsis thaliana (Mouse-ear cress)).